The chain runs to 556 residues: Vacuolar protein 8 (556 aa).

Gly-2 is lipidated: N-myristoyl glycine. S-palmitoyl cysteine attachment occurs at residues Cys-4, Cys-5, and Cys-7. ARM repeat units follow at residues 38 to 74 (NRSEVDFFTDGPLRALSTLVYSENIDLQRSAALAFAE), 75 to 115 (VTEK…NLAV), 117 to 156 (DSNKVLIVNMGGLEPLIRQMMSPNIEVQCNAVGCITNLAT), 158 to 197 (DQNKSKIATSGALIPLTKLAKSKDLRVQRNATGALLNMTH), 199 to 238 (LENRQELVNAGSVPILVQLLSSTDPDVQYYCTTALSNIAV), 242 to 281 (NRKKLASTEPKLISQLVQLMDSTSPRVQCQATLALRNLAS), 283 to 322 (ANYQLEIVRAGGLPNLVTLLNSTHQPLVLAAVACIRNISI), 324 to 364 (PLNE…NLAA), and 408 to 447 (DDLKMKLLDSNIIEVLLPLTSSENGEVCGNAAAALANLCS).

It belongs to the beta-catenin family.

Its subcellular location is the vacuole membrane. Functions in both vacuole inheritance and protein targeting from the cytoplasm to vacuole. In Komagataella pastoris (Yeast), this protein is Vacuolar protein 8 (VAC8).